Here is a 361-residue protein sequence, read N- to C-terminus: uncharacterized protein (361 aa).

T12 is modified (phosphothreonine).

It is found in the cytoplasm. It localises to the nucleus. This is an uncharacterized protein from Schizosaccharomyces pombe (strain 972 / ATCC 24843) (Fission yeast).